Here is a 310-residue protein sequence, read N- to C-terminus: Aspartate carbamoyltransferase catalytic subunit (310 aa).

Carbamoyl phosphate is bound by residues R58 and T59. K86 is a binding site for L-aspartate. Residues R108, H137, and Q140 each contribute to the carbamoyl phosphate site. The L-aspartate site is built by R170 and R225. 2 residues coordinate carbamoyl phosphate: G264 and P265.

The protein belongs to the aspartate/ornithine carbamoyltransferase superfamily. ATCase family. In terms of assembly, heterododecamer (2C3:3R2) of six catalytic PyrB chains organized as two trimers (C3), and six regulatory PyrI chains organized as three dimers (R2).

The enzyme catalyses carbamoyl phosphate + L-aspartate = N-carbamoyl-L-aspartate + phosphate + H(+). It participates in pyrimidine metabolism; UMP biosynthesis via de novo pathway; (S)-dihydroorotate from bicarbonate: step 2/3. In terms of biological role, catalyzes the condensation of carbamoyl phosphate and aspartate to form carbamoyl aspartate and inorganic phosphate, the committed step in the de novo pyrimidine nucleotide biosynthesis pathway. The polypeptide is Aspartate carbamoyltransferase catalytic subunit (Coxiella burnetii (strain CbuK_Q154) (Coxiella burnetii (strain Q154))).